Reading from the N-terminus, the 338-residue chain is Lipoate-protein ligase A (338 aa).

The region spanning Pro-29–Val-216 is the BPL/LPL catalytic domain. ATP is bound by residues Arg-71, Gly-76–Phe-79, and Lys-134. Lys-134 contributes to the (R)-lipoate binding site.

Belongs to the LplA family. Monomer.

The protein resides in the cytoplasm. The enzyme catalyses L-lysyl-[lipoyl-carrier protein] + (R)-lipoate + ATP = N(6)-[(R)-lipoyl]-L-lysyl-[lipoyl-carrier protein] + AMP + diphosphate + H(+). It participates in protein modification; protein lipoylation via exogenous pathway; protein N(6)-(lipoyl)lysine from lipoate: step 1/2. It functions in the pathway protein modification; protein lipoylation via exogenous pathway; protein N(6)-(lipoyl)lysine from lipoate: step 2/2. Its function is as follows. Catalyzes both the ATP-dependent activation of exogenously supplied lipoate to lipoyl-AMP and the transfer of the activated lipoyl onto the lipoyl domains of lipoate-dependent enzymes. This Escherichia coli O1:K1 / APEC protein is Lipoate-protein ligase A.